Reading from the N-terminus, the 312-residue chain is Borealin-2 (312 aa).

Basic residues predominate over residues 1–10 (MPPRKAPAKR). Positions 1-26 (MPPRKAPAKRRSTDSGVERDRGALSQ) are disordered. Residues 11-26 (RSTDSGVERDRGALSQ) show a composition bias toward basic and acidic residues.

The protein belongs to the borealin family. In terms of assembly, component of the CPC complex.

Its subcellular location is the nucleus. It localises to the chromosome. It is found in the centromere. Component of the chromosomal passenger complex (CPC), a complex that acts as a key regulator of mitosis. The CPC complex has essential functions at the centromere in ensuring correct chromosome alignment and segregation and is required for chromatin-induced microtubule stabilization and spindle assembly. This chain is Borealin-2, found in Gallus gallus (Chicken).